Reading from the N-terminus, the 205-residue chain is Putative C-type lectin protein FPV001/FPV260 (205 aa).

Residues 84–187 (CPRDWISHNG…CSVRRYLVCK (104 aa)) enclose the C-type lectin domain.

This is Putative C-type lectin protein FPV001/FPV260 from Fowlpox virus (strain NVSL) (FPV).